Reading from the N-terminus, the 159-residue chain is Peripheral myelin protein 22 (159 aa).

Position 1 (Met-1) is a topological domain, cytoplasmic. The chain crosses the membrane as a helical span at residues 2–31; the sequence is LLLLLGIIVLHVAVLVLLFVATIVSQWIVG. Topologically, residues 32 to 64 are extracellular; the sequence is NGHATDLWQNCSTTSGNVQHCLSSSANEWLQSV. N-linked (GlcNAc...) asparagine glycosylation occurs at Asn-41. Residues 65-91 form a helical membrane-spanning segment; the sequence is QATMILSIIFSVLSLFLFFCQLFTLTK. Residues 92-95 are Cytoplasmic-facing; the sequence is GGRF. The helical transmembrane segment at 96–119 threads the bilayer; sequence YITGIFQILAGLCVMSAASIYTVR. Topologically, residues 120–133 are extracellular; sequence HPEWHLDSAYSYGF. A helical transmembrane segment spans residues 134-156; it reads AYILAWVAFPLALLSGVVYVILR. At 157–159 the chain is on the cytoplasmic side; it reads KRE.

The protein belongs to the PMP-22/EMP/MP20 family. Ubiquitinated by the DCX(DCAF13) E3 ubiquitin ligase complex, leading to its degradation.

It is found in the cell membrane. Its function is as follows. Might be involved in growth regulation, and in myelinization in the peripheral nervous system. The sequence is that of Peripheral myelin protein 22 (PMP22) from Equus caballus (Horse).